A 658-amino-acid polypeptide reads, in one-letter code: Threonine--tRNA ligase (658 aa).

Residues 1–61 (MIELVFPDGS…EKGGAFKILT (61 aa)) form the TGS domain. Positions 243–535 (DHRKLGRQMD…LIENYAGAFP (293 aa)) are catalytic. The Zn(2+) site is built by Cys335, His386, and His512.

Belongs to the class-II aminoacyl-tRNA synthetase family. In terms of assembly, homodimer. It depends on Zn(2+) as a cofactor.

Its subcellular location is the cytoplasm. The enzyme catalyses tRNA(Thr) + L-threonine + ATP = L-threonyl-tRNA(Thr) + AMP + diphosphate + H(+). In terms of biological role, catalyzes the attachment of threonine to tRNA(Thr) in a two-step reaction: L-threonine is first activated by ATP to form Thr-AMP and then transferred to the acceptor end of tRNA(Thr). Also edits incorrectly charged L-seryl-tRNA(Thr). This is Threonine--tRNA ligase from Phenylobacterium zucineum (strain HLK1).